The sequence spans 104 residues: DNA-directed RNA polymerase subunit omega (104 aa).

The tract at residues 53–104 is disordered; the sequence is EIESGNVTIHPDPEGKREAVRRRIEEEKRRKEEEEKKIKEQIAKEKEDGEKI. A compositionally biased stretch (basic and acidic residues) spans 63-104; the sequence is PDPEGKREAVRRRIEEEKRRKEEEEKKIKEQIAKEKEDGEKI.

This sequence belongs to the RNA polymerase subunit omega family. The RNAP catalytic core consists of 2 alpha, 1 beta, 1 beta' and 1 omega subunit. When a sigma factor is associated with the core the holoenzyme is formed, which can initiate transcription.

The catalysed reaction is RNA(n) + a ribonucleoside 5'-triphosphate = RNA(n+1) + diphosphate. Its function is as follows. Promotes RNA polymerase assembly. Latches the N- and C-terminal regions of the beta' subunit thereby facilitating its interaction with the beta and alpha subunits. The protein is DNA-directed RNA polymerase subunit omega of Streptococcus pneumoniae serotype 2 (strain D39 / NCTC 7466).